We begin with the raw amino-acid sequence, 63 residues long: SPbeta prophage-derived uncharacterized protein YomP (63 aa).

This is SPbeta prophage-derived uncharacterized protein YomP (yomP) from Bacillus subtilis (strain 168).